Consider the following 84-residue polypeptide: Large ribosomal subunit protein bL27 (84 aa).

It belongs to the bacterial ribosomal protein bL27 family.

This is Large ribosomal subunit protein bL27 from Salinispora tropica (strain ATCC BAA-916 / DSM 44818 / JCM 13857 / NBRC 105044 / CNB-440).